We begin with the raw amino-acid sequence, 195 residues long: Peptidyl-tRNA hydrolase (195 aa).

Position 17 (tyrosine 17) interacts with tRNA. Histidine 22 serves as the catalytic Proton acceptor. TRNA contacts are provided by tyrosine 68, asparagine 70, and asparagine 116.

This sequence belongs to the PTH family. In terms of assembly, monomer.

The protein localises to the cytoplasm. The catalysed reaction is an N-acyl-L-alpha-aminoacyl-tRNA + H2O = an N-acyl-L-amino acid + a tRNA + H(+). In terms of biological role, hydrolyzes ribosome-free peptidyl-tRNAs (with 1 or more amino acids incorporated), which drop off the ribosome during protein synthesis, or as a result of ribosome stalling. Functionally, catalyzes the release of premature peptidyl moieties from peptidyl-tRNA molecules trapped in stalled 50S ribosomal subunits, and thus maintains levels of free tRNAs and 50S ribosomes. This is Peptidyl-tRNA hydrolase from Shewanella oneidensis (strain ATCC 700550 / JCM 31522 / CIP 106686 / LMG 19005 / NCIMB 14063 / MR-1).